A 60-amino-acid chain; its full sequence is uncharacterized protein (60 aa).

This is an uncharacterized protein from Ureaplasma parvum serovar 3 (strain ATCC 700970).